Consider the following 191-residue polypeptide: Fe/S biogenesis protein NfuA (191 aa).

[4Fe-4S] cluster contacts are provided by Cys149 and Cys152.

It belongs to the NfuA family. Homodimer. It depends on [4Fe-4S] cluster as a cofactor.

Involved in iron-sulfur cluster biogenesis. Binds a 4Fe-4S cluster, can transfer this cluster to apoproteins, and thereby intervenes in the maturation of Fe/S proteins. Could also act as a scaffold/chaperone for damaged Fe/S proteins. The chain is Fe/S biogenesis protein NfuA from Edwardsiella ictaluri (strain 93-146).